Reading from the N-terminus, the 120-residue chain is uncharacterized protein (120 aa).

A helical membrane pass occupies residues 19–41 (YPELFITWCVMTYTFGVAGYMLG). A disordered region spans residues 57 to 78 (SKNAHPWEDTKSSSGKSDESLD). Over residues 61 to 75 (HPWEDTKSSSGKSDE) the composition is skewed to basic and acidic residues.

It localises to the membrane. This is an uncharacterized protein from Schizosaccharomyces pombe (strain 972 / ATCC 24843) (Fission yeast).